A 914-amino-acid chain; its full sequence is Penicillin-binding protein 1A/1B (914 aa).

The tract at residues 1 to 29 is disordered; it reads MSDQFNSREARRKANSKSSPSPKKGKKRK. The Cytoplasmic portion of the chain corresponds to 1–37; the sequence is MSDQFNSREARRKANSKSSPSPKKGKKRKKGGLFKKT. The helical; Signal-anchor for type II membrane protein transmembrane segment at 38–58 threads the bilayer; the sequence is LFTLLILFVLGVVGGAVTFAV. At 59-914 the chain is on the extracellular side; it reads MVSDAPSLDE…TNSSSIEKTN (856 aa). The tract at residues 77 to 246 is transglycosylase; the sequence is STIYDKNGKE…TAYNPVKNPD (170 aa). E115 acts as the Proton donor; for transglycosylase activity in catalysis. The transpeptidase stretch occupies residues 329 to 662; it reads TKAQDKLDEL…PDSVVEATVE (334 aa). Catalysis depends on S390, which acts as the Acyl-ester intermediate; for transpeptidase activity. Residues 708–795 enclose the Fibronectin type-III domain; it reads KLSGLNVKYD…SYEVPKAEDD (88 aa). A disordered region spans residues 773 to 914; sequence TAVSDDGKST…TNSSSIEKTN (142 aa). Positions 798–828 are enriched in basic and acidic residues; it reads KKDQQQTDDEKQDDEKTQDDTQTDDSQKDDG. Residues 829-840 show a composition bias toward acidic residues; that stretch reads QTDQDQTDDSTN. 2 stretches are compositionally biased toward low complexity: residues 848–892 and 900–914; these read NTNT…GSDT and SNKT…EKTN.

In the N-terminal section; belongs to the glycosyltransferase 51 family. The protein in the C-terminal section; belongs to the transpeptidase family. In terms of processing, the product expressed from the translation of the ponA gene appears as two bands on a gel (1A and 1B), but the specific amino acid sequence of each protein is unknown. Post-translationally, the N-terminus is blocked.

It is found in the cell membrane. Its subcellular location is the forespore inner membrane. It catalyses the reaction [GlcNAc-(1-&gt;4)-Mur2Ac(oyl-L-Ala-gamma-D-Glu-L-Lys-D-Ala-D-Ala)](n)-di-trans,octa-cis-undecaprenyl diphosphate + beta-D-GlcNAc-(1-&gt;4)-Mur2Ac(oyl-L-Ala-gamma-D-Glu-L-Lys-D-Ala-D-Ala)-di-trans,octa-cis-undecaprenyl diphosphate = [GlcNAc-(1-&gt;4)-Mur2Ac(oyl-L-Ala-gamma-D-Glu-L-Lys-D-Ala-D-Ala)](n+1)-di-trans,octa-cis-undecaprenyl diphosphate + di-trans,octa-cis-undecaprenyl diphosphate + H(+). The enzyme catalyses Preferential cleavage: (Ac)2-L-Lys-D-Ala-|-D-Ala. Also transpeptidation of peptidyl-alanyl moieties that are N-acyl substituents of D-alanine.. It participates in cell wall biogenesis; peptidoglycan biosynthesis. Cell wall formation. Synthesis of cross-linked peptidoglycan from the lipid intermediates. The enzyme has a penicillin-insensitive transglycosylase N-terminal domain (formation of linear glycan strands) and a penicillin-sensitive transpeptidase C-terminal domain (cross-linking of the peptide subunits). Required for vegetative growth. Has a partially redundant function with PBP-2A (pbpA) during spore outgrowth. In Bacillus subtilis (strain 168), this protein is Penicillin-binding protein 1A/1B (ponA).